Consider the following 191-residue polypeptide: 3-isopropylmalate dehydratase small subunit (191 aa).

It belongs to the LeuD family. LeuD type 1 subfamily. As to quaternary structure, heterodimer of LeuC and LeuD.

It carries out the reaction (2R,3S)-3-isopropylmalate = (2S)-2-isopropylmalate. Its pathway is amino-acid biosynthesis; L-leucine biosynthesis; L-leucine from 3-methyl-2-oxobutanoate: step 2/4. In terms of biological role, catalyzes the isomerization between 2-isopropylmalate and 3-isopropylmalate, via the formation of 2-isopropylmaleate. The sequence is that of 3-isopropylmalate dehydratase small subunit from Solibacter usitatus (strain Ellin6076).